A 221-amino-acid chain; its full sequence is Pyridoxine/pyridoxamine 5'-phosphate oxidase (221 aa).

Substrate contacts are provided by residues 14-17 (RNEY) and Lys-73. FMN contacts are provided by residues 68–73 (RTVLLK), 83–84 (FT), Lys-90, and Gln-112. The substrate site is built by Tyr-130, Arg-134, and Ser-138. Residues 147-148 (QS) and Trp-193 each bind FMN. 199–201 (RLH) contributes to the substrate binding site. Residue Arg-203 coordinates FMN.

It belongs to the pyridoxamine 5'-phosphate oxidase family. Homodimer. FMN serves as cofactor.

The enzyme catalyses pyridoxamine 5'-phosphate + O2 + H2O = pyridoxal 5'-phosphate + H2O2 + NH4(+). The catalysed reaction is pyridoxine 5'-phosphate + O2 = pyridoxal 5'-phosphate + H2O2. The protein operates within cofactor metabolism; pyridoxal 5'-phosphate salvage; pyridoxal 5'-phosphate from pyridoxamine 5'-phosphate: step 1/1. It participates in cofactor metabolism; pyridoxal 5'-phosphate salvage; pyridoxal 5'-phosphate from pyridoxine 5'-phosphate: step 1/1. Catalyzes the oxidation of either pyridoxine 5'-phosphate (PNP) or pyridoxamine 5'-phosphate (PMP) into pyridoxal 5'-phosphate (PLP). This is Pyridoxine/pyridoxamine 5'-phosphate oxidase from Salinispora arenicola (strain CNS-205).